A 302-amino-acid chain; its full sequence is Aspartate carbamoyltransferase catalytic subunit (302 aa).

Residues R53 and T54 each coordinate carbamoyl phosphate. K82 lines the L-aspartate pocket. R103, H131, and Q134 together coordinate carbamoyl phosphate. R164 and R223 together coordinate L-aspartate. Carbamoyl phosphate is bound by residues L260 and P261.

This sequence belongs to the aspartate/ornithine carbamoyltransferase superfamily. ATCase family. Heterooligomer of catalytic and regulatory chains.

It carries out the reaction carbamoyl phosphate + L-aspartate = N-carbamoyl-L-aspartate + phosphate + H(+). Its pathway is pyrimidine metabolism; UMP biosynthesis via de novo pathway; (S)-dihydroorotate from bicarbonate: step 2/3. Catalyzes the condensation of carbamoyl phosphate and aspartate to form carbamoyl aspartate and inorganic phosphate, the committed step in the de novo pyrimidine nucleotide biosynthesis pathway. The polypeptide is Aspartate carbamoyltransferase catalytic subunit (Methanococcus maripaludis (strain C5 / ATCC BAA-1333)).